A 500-amino-acid polypeptide reads, in one-letter code: MEVGSNEVKGKIVEVLGPVVDAEFPRDGVPDILDALRIEREDSRDLILEVQQHLGERRVRAIAMDSTDGLQRGQAIAATNQPISVPIGEEIRGRLFNVVGQPIDGLPEPDVDERRAIHQDPPEYNELTGSQEVLETGIKVMDLIQPVPKGGKVGLFGGAGVGKTVLIMELINNIAKAHEGLSVFSGVGERTREGNDLLREMIEAGVMTYGEEFRESMESGGWDLDKVDFDEMNSESNISLVFGQMNEPPGARARVGLTGLTIAEYFRDLGGRDVLFFLDNIFRFVQAGQEMSALMGRMPSAVGYQPTLASEMGDLQERITSTQEGSITSFQAVYVPADDLTDPAPATTFAHLDCTTVLSRQLSTQGIYPAIDPLDSTSQMLNERALGTEHYETAQDVKEILQRYEELQDIIAILGMDELSDEDKQAVNRARRVQRFLSQPFFVAEQFTGQPGKYVPIEETIRGFRMILDGELDHLPERAFLLKGTIDEVIEAGEEMAEEA.

157-164 (GGAGVGKT) is an ATP binding site.

The protein belongs to the ATPase alpha/beta chains family. In terms of assembly, F-type ATPases have 2 components, CF(1) - the catalytic core - and CF(0) - the membrane proton channel. CF(1) has five subunits: alpha(3), beta(3), gamma(1), delta(1), epsilon(1). CF(0) has three main subunits: a(1), b(2) and c(9-12). The alpha and beta chains form an alternating ring which encloses part of the gamma chain. CF(1) is attached to CF(0) by a central stalk formed by the gamma and epsilon chains, while a peripheral stalk is formed by the delta and b chains.

Its subcellular location is the cell inner membrane. The enzyme catalyses ATP + H2O + 4 H(+)(in) = ADP + phosphate + 5 H(+)(out). Its function is as follows. Produces ATP from ADP in the presence of a proton gradient across the membrane. The catalytic sites are hosted primarily by the beta subunits. This Salinibacter ruber (strain DSM 13855 / M31) protein is ATP synthase subunit beta.